We begin with the raw amino-acid sequence, 410 residues long: Peptidase T (410 aa).

Zn(2+) is bound at residue His-79. The active site involves Asp-81. Asp-142 contributes to the Zn(2+) binding site. Residue Glu-176 is the Proton acceptor of the active site. Positions 177, 199, and 381 each coordinate Zn(2+).

This sequence belongs to the peptidase M20B family. Requires Zn(2+) as cofactor.

The protein localises to the cytoplasm. It carries out the reaction Release of the N-terminal residue from a tripeptide.. In terms of biological role, cleaves the N-terminal amino acid of tripeptides. The sequence is that of Peptidase T from Geobacillus sp. (strain WCH70).